A 177-amino-acid chain; its full sequence is Translation initiation factor IF-3 (177 aa).

It belongs to the IF-3 family. As to quaternary structure, monomer.

Its subcellular location is the cytoplasm. In terms of biological role, IF-3 binds to the 30S ribosomal subunit and shifts the equilibrium between 70S ribosomes and their 50S and 30S subunits in favor of the free subunits, thus enhancing the availability of 30S subunits on which protein synthesis initiation begins. This Nostoc punctiforme (strain ATCC 29133 / PCC 73102) protein is Translation initiation factor IF-3.